The sequence spans 138 residues: Cysteine desulfuration protein SufE (138 aa).

The Cysteine persulfide intermediate role is filled by Cys-51.

The protein belongs to the SufE family. In terms of assembly, homodimer. Interacts with SufS.

The protein localises to the cytoplasm. The protein operates within cofactor biosynthesis; iron-sulfur cluster biosynthesis. In terms of biological role, participates in cysteine desulfuration mediated by SufS. Cysteine desulfuration mobilizes sulfur from L-cysteine to yield L-alanine and constitutes an essential step in sulfur metabolism for biosynthesis of a variety of sulfur-containing biomolecules. Functions as a sulfur acceptor for SufS, by mediating the direct transfer of the sulfur atom from the S-sulfanylcysteine of SufS, an intermediate product of cysteine desulfuration process. The sequence is that of Cysteine desulfuration protein SufE from Escherichia coli O6:K15:H31 (strain 536 / UPEC).